Reading from the N-terminus, the 105-residue chain is Protein ORFg in retron Ec67 (105 aa).

This is Protein ORFg in retron Ec67 from Escherichia coli.